A 315-amino-acid chain; its full sequence is Methionyl-tRNA formyltransferase (315 aa).

Positions 2–189 are N-terminal domain; sequence SDSLRIIFAG…LITTLKQLAD (188 aa). 113-116 lines the (6S)-5,6,7,8-tetrahydrofolate pocket; the sequence is SLLP. Residues 210–315 are C-terminal domain; sequence KEEARIDWSL…EWFIPGNRLA (106 aa).

This sequence belongs to the Fmt family.

It carries out the reaction L-methionyl-tRNA(fMet) + (6R)-10-formyltetrahydrofolate = N-formyl-L-methionyl-tRNA(fMet) + (6S)-5,6,7,8-tetrahydrofolate + H(+). Attaches a formyl group to the free amino group of methionyl-tRNA(fMet). The formyl group appears to play a dual role in the initiator identity of N-formylmethionyl-tRNA by promoting its recognition by IF2 and preventing the misappropriation of this tRNA by the elongation apparatus. This chain is Methionyl-tRNA formyltransferase, found in Salmonella choleraesuis (strain SC-B67).